Consider the following 178-residue polypeptide: ATP synthase subunit delta (178 aa).

It belongs to the ATPase delta chain family. F-type ATPases have 2 components, F(1) - the catalytic core - and F(0) - the membrane proton channel. F(1) has five subunits: alpha(3), beta(3), gamma(1), delta(1), epsilon(1). F(0) has three main subunits: a(1), b(2) and c(10-14). The alpha and beta chains form an alternating ring which encloses part of the gamma chain. F(1) is attached to F(0) by a central stalk formed by the gamma and epsilon chains, while a peripheral stalk is formed by the delta and b chains.

It localises to the cell membrane. F(1)F(0) ATP synthase produces ATP from ADP in the presence of a proton or sodium gradient. F-type ATPases consist of two structural domains, F(1) containing the extramembraneous catalytic core and F(0) containing the membrane proton channel, linked together by a central stalk and a peripheral stalk. During catalysis, ATP synthesis in the catalytic domain of F(1) is coupled via a rotary mechanism of the central stalk subunits to proton translocation. In terms of biological role, this protein is part of the stalk that links CF(0) to CF(1). It either transmits conformational changes from CF(0) to CF(1) or is implicated in proton conduction. This is ATP synthase subunit delta from Streptococcus equi subsp. zooepidemicus (strain H70).